Consider the following 368-residue polypeptide: Nuclease EXOG, mitochondrial (368 aa).

A mitochondrion-targeting transit peptide spans 1-41 (MAIKSIASRLRGSRRFLSGFVAGAVVGAAGAGLAALQFFRS). H140 (proton acceptor) is an active-site residue. N171 contributes to the a divalent metal cation binding site.

Belongs to the DNA/RNA non-specific endonuclease family. Homodimer. A divalent metal cation is required as a cofactor. In terms of tissue distribution, ubiquitous.

Its subcellular location is the mitochondrion inner membrane. Endo/exonuclease with nicking activity towards supercoiled DNA, a preference for single-stranded DNA and 5'-3' exonuclease activity. This Homo sapiens (Human) protein is Nuclease EXOG, mitochondrial (EXOG).